Consider the following 161-residue polypeptide: Endoribonuclease YbeY (161 aa).

The Zn(2+) site is built by histidine 120, histidine 124, and histidine 130.

This sequence belongs to the endoribonuclease YbeY family. The cofactor is Zn(2+).

The protein localises to the cytoplasm. Its function is as follows. Single strand-specific metallo-endoribonuclease involved in late-stage 70S ribosome quality control and in maturation of the 3' terminus of the 16S rRNA. In Erythrobacter litoralis (strain HTCC2594), this protein is Endoribonuclease YbeY.